The following is a 240-amino-acid chain: Axial regulator YABBY 3 (240 aa).

A C4-type zinc finger spans residues 30 to 57; the sequence is CSFCDTVLAVSVPPSSLFKTVTVRCGHC. The disordered stretch occupies residues 135–156; it reads DHLQEMPRPPPANRPPEKRQRV.

This sequence belongs to the YABBY family. As to quaternary structure, interacts with SPL/NZZ. Interacts with SPEAR2. Binds to LUG and LUH; these complexes promote adaxial cell identity in leaves as well as embryonic shoot apical meristem (SAM) initiation and postembryonic SAM maintenance. In terms of tissue distribution, expressed in abaxial regions of lateral aerial organ primordia leading to cotyledons, leaves, flower meristems, sepals, petals, stamen and carpels, but not in roots.

It localises to the nucleus. In terms of biological role, involved in the abaxial cell fate determination during embryogenesis and organogenesis. Regulates the initiation of embryonic shoot apical meristem (SAM) development. Contributes to the repression of KNOX genes (STM, KNAT1/BP and KNAT2) to avoid ectopic meristems. Binds DNA without sequence specificity. In Arabidopsis thaliana (Mouse-ear cress), this protein is Axial regulator YABBY 3 (YAB3).